A 282-amino-acid polypeptide reads, in one-letter code: Complement component 1 Q subcomponent-binding protein, mitochondrial (282 aa).

A mitochondrion-targeting transit peptide spans 1 to 70 (MLPLLRCVPR…PRGPCACGCG (70 aa)). The interval 76 to 93 (TEGDKAFVDFLNDEIKEE) is C1q binding. At K91 the chain carries N6-acetyllysine. The segment at 137–163 (NSIPPTFDGEEEPTQGQKVEEQEPELT) is disordered. An interaction with MAVS region spans residues 168–213 (FVVEVIKNDDGKKALVLDCHYPEDEVGQEDEAESDIFSIREVSFQS). Phosphotyrosine is present on Y188. 2 positions are modified to phosphoserine: S201 and S205.

Belongs to the MAM33 family. In terms of assembly, homotrimer; three monomers form a donut-shaped structure with an unusually asymmetric charge distribution on the surface. Interacts with CDK13, HRK, VTN, NFYB, ADRA1B, FOXC1, DDX21, DDX50, NCL, SRSF1 and SRSF9. Interacts with CD93; the association may represent a cell surface C1q receptor. Interacts with KRT1; the association represents a cell surface kininogen receptor. Interacts with CD209; the interaction is indicative for a C1q:C1QBP:CD209 signaling complex. Interacts with FBL and RRP1; the respective interactions with C1QBP are competitive. Probably associates with the mitoribosome. Interacts with MAVS; the interaction occurs upon viral transfection. Interacts with PPIF. Interacts with U2AF1L4. Interacts with PLEKHN1. Interacts with VGF-derived peptide TLQP-21. Interacts with MRE11 and RAD50; forming the MRC (MRE11-RAD50-C1QBP) complex that inhibits the activity of MRE11. (Microbial infection) Interacts with Rubella virus capsid protein; the interaction occurs in mitochondria. As to quaternary structure, (Microbial infection) Interacts with L.monocytogenes InlB.

It is found in the mitochondrion matrix. The protein resides in the nucleus. The protein localises to the cell membrane. Its subcellular location is the secreted. It localises to the cytoplasm. It is found in the nucleolus. Functionally, multifunctional and multicompartmental protein involved in inflammation and infection processes, ribosome biogenesis, protein synthesis in mitochondria, regulation of apoptosis, transcriptional regulation and pre-mRNA splicing. At the cell surface is thought to act as an endothelial receptor for plasma proteins of the complement and kallikrein-kinin cascades. Putative receptor for C1q; specifically binds to the globular 'heads' of C1q thus inhibiting C1; may perform the receptor function through a complex with C1qR/CD93. In complex with cytokeratin-1/KRT1 is a high affinity receptor for kininogen-1/HMWK. Can also bind other plasma proteins, such as coagulation factor XII leading to its autoactivation. May function to bind initially fluid kininogen-1 to the cell membrane. The secreted form may enhance both extrinsic and intrinsic coagulation pathways. It is postulated that the cell surface form requires docking with transmembrane proteins for downstream signaling which might be specific for a cell-type or response. By acting as C1q receptor is involved in chemotaxis of immature dendritic cells and neutrophils and is proposed to signal through CD209/DC-SIGN on immature dendritic cells, through integrin alpha-4/beta-1 during trophoblast invasion of the decidua, and through integrin beta-1 during endothelial cell adhesion and spreading. Signaling involved in inhibition of innate immune response is implicating the PI3K-AKT/PKB pathway. Required for protein synthesis in mitochondria. In mitochondrial translation may be involved in formation of functional 55S mitoribosomes; the function seems to involve its RNA-binding activity. Acts as a RNA modification reader, which specifically recognizes and binds mitochondrial RNAs modified by C5-methylcytosine (m5C) in response to stress, and promotes recruitment of the mitochondrial degradosome complex, leading to their degradation. May be involved in the nucleolar ribosome maturation process; the function may involve the exchange of FBL for RRP1 in the association with pre-ribosome particles. Involved in regulation of RNA splicing by inhibiting the RNA-binding capacity of SRSF1 and its phosphorylation. Is required for the nuclear translocation of splicing factor U2AF1L4. Involved in regulation of CDKN2A- and HRK-mediated apoptosis. Stabilizes mitochondrial CDKN2A isoform smARF. May be involved in regulation of FOXC1 transcriptional activity and NFY/CCAAT-binding factor complex-mediated transcription. May play a role in antibacterial defense as it can bind to cell surface hyaluronan and inhibit Streptococcus pneumoniae hyaluronate lyase. May be involved in modulation of the immune response; ligation by HCV core protein is resulting in suppression of interleukin-12 production in monocyte-derived dendritic cells. Involved in regulation of antiviral response by inhibiting RIGI- and IFIH1-mediated signaling pathways probably involving its association with MAVS after viral infection. Acts as a regulator of DNA repair via homologous recombination by inhibiting the activity of MRE11: interacts with unphosphorylated MRE11 and RAD50 in absence of DNA damage, preventing formation and activity of the MRN complex. Following DNA damage, dissociates from phosphorylated MRE11, allowing formation of the MRN complex. (Microbial infection) During bacterial infection processes acts as an attachment site for microbial proteins, including Listeria monocytogenes internalin B (InlB). This is Complement component 1 Q subcomponent-binding protein, mitochondrial (C1QBP) from Chlorocebus aethiops (Green monkey).